A 485-amino-acid chain; its full sequence is MELFDLTIHELHDRLKRKELSSVEATRAMLARIEAVDPKVNAYITVTPEEALAAAEAADRRIAAGDMAPLTGIPVALKDIFVTKGIRTTCASKILDNFVPPYDGTAVAKLKEAGAVIVGKLNQDEFAMGSSGESSAFGPTRNPWNLECIPGGSSSGSAAAIAARTATATLGTDTGGSIRQPASHCGCVGLRPTYGRVSRYGVIAYASSLDQVGPVTRDVTDCALMLQAVAGHDPMDSTSVEVPVPDYAKGLTGDVKGLKLGLPKEYYIEGLDPDVKKALDEAIETYRGLGAEFVDISLPHTDYAVATYYLIATAEASSNLARYEGVRFGHRTEGAANLIDMFRKTRSEGFGDEVKRRIMIGTYALSSGYYDAYYLKAQKVRTLIMQDFLKAFEAVDAILTPVAPTPAFKIGEKTSDPLRMYLSDIFTIPVNLAGTCAVSVPAGMSGAGLPIGLQLIGRPFGEETILRAAHAFEQATAWHTQKAGI.

Catalysis depends on charge relay system residues Lys78 and Ser153. The Acyl-ester intermediate role is filled by Ser177.

The protein belongs to the amidase family. GatA subfamily. In terms of assembly, heterotrimer of A, B and C subunits.

It carries out the reaction L-glutamyl-tRNA(Gln) + L-glutamine + ATP + H2O = L-glutaminyl-tRNA(Gln) + L-glutamate + ADP + phosphate + H(+). Its function is as follows. Allows the formation of correctly charged Gln-tRNA(Gln) through the transamidation of misacylated Glu-tRNA(Gln) in organisms which lack glutaminyl-tRNA synthetase. The reaction takes place in the presence of glutamine and ATP through an activated gamma-phospho-Glu-tRNA(Gln). This is Glutamyl-tRNA(Gln) amidotransferase subunit A from Geobacter metallireducens (strain ATCC 53774 / DSM 7210 / GS-15).